The following is a 176-amino-acid chain: Ribosome maturation factor RimM (176 aa).

The region spanning 93–172 (EGEFFYFDVL…EILTKDAKSI (80 aa)) is the PRC barrel domain.

Belongs to the RimM family. In terms of assembly, binds ribosomal protein uS19.

It is found in the cytoplasm. An accessory protein needed during the final step in the assembly of 30S ribosomal subunit, possibly for assembly of the head region. Essential for efficient processing of 16S rRNA. May be needed both before and after RbfA during the maturation of 16S rRNA. It has affinity for free ribosomal 30S subunits but not for 70S ribosomes. In Campylobacter curvus (strain 525.92), this protein is Ribosome maturation factor RimM.